The primary structure comprises 425 residues: UDP-N-acetylglucosamine 1-carboxyvinyltransferase (425 aa).

25 to 26 (KN) is a phosphoenolpyruvate binding site. R95 contributes to the UDP-N-acetyl-alpha-D-glucosamine binding site. C119 acts as the Proton donor in catalysis. Position 119 is a 2-(S-cysteinyl)pyruvic acid O-phosphothioketal (C119). Residues 124–128 (RPVDQ), D306, and I328 each bind UDP-N-acetyl-alpha-D-glucosamine.

The protein belongs to the EPSP synthase family. MurA subfamily.

It is found in the cytoplasm. It carries out the reaction phosphoenolpyruvate + UDP-N-acetyl-alpha-D-glucosamine = UDP-N-acetyl-3-O-(1-carboxyvinyl)-alpha-D-glucosamine + phosphate. The protein operates within cell wall biogenesis; peptidoglycan biosynthesis. Its function is as follows. Cell wall formation. Adds enolpyruvyl to UDP-N-acetylglucosamine. This is UDP-N-acetylglucosamine 1-carboxyvinyltransferase from Thermus thermophilus (strain ATCC 27634 / DSM 579 / HB8).